Here is a 608-residue protein sequence, read N- to C-terminus: Phosphogluconate dehydratase (608 aa).

Positions 154 and 221 each coordinate [4Fe-4S] cluster.

The protein belongs to the IlvD/Edd family. The cofactor is [4Fe-4S] cluster.

It catalyses the reaction 6-phospho-D-gluconate = 2-dehydro-3-deoxy-6-phospho-D-gluconate + H2O. Its pathway is carbohydrate metabolism; Entner-Doudoroff pathway. Functionally, catalyzes the dehydration of 6-phospho-D-gluconate to 2-dehydro-3-deoxy-6-phospho-D-gluconate. This is Phosphogluconate dehydratase from Helicobacter pylori (strain ATCC 700392 / 26695) (Campylobacter pylori).